Consider the following 380-residue polypeptide: Glucose-1-phosphate adenylyltransferase (380 aa).

Alpha-D-glucose 1-phosphate contacts are provided by residues Gly164, 179–180, and Ser190; that span reads EK.

This sequence belongs to the bacterial/plant glucose-1-phosphate adenylyltransferase family. Homotetramer.

It carries out the reaction alpha-D-glucose 1-phosphate + ATP + H(+) = ADP-alpha-D-glucose + diphosphate. It functions in the pathway glycan biosynthesis; glycogen biosynthesis. In terms of biological role, involved in the biosynthesis of ADP-glucose, a building block required for the elongation reactions to produce glycogen. Catalyzes the reaction between ATP and alpha-D-glucose 1-phosphate (G1P) to produce pyrophosphate and ADP-Glc. This Streptococcus pneumoniae (strain 70585) protein is Glucose-1-phosphate adenylyltransferase.